The following is a 417-amino-acid chain: MSEKWDSNSSESWNHIWSGNDTQHHWYSDINITYVNYYLHQPQVAAVFISSYLLIFVLCMVGNTVVCFIVIRNRHMHTVTNFFILNLAISDLLVGIFCMPITLLDNIIAGWPFGSSMCKISGLVQGISVAASVFTLVAIAVDRFRCVVYPFKPKLTVKTAFVTIVIIWGLAIAIMTPSAIMLHVQEEKYYRVRLSSHNKTSTVYWCREDWPRHEMRRIYTTVLFATIYLAPLSLIVIMYARIGASLFKTAAHCTGKQRPVQWHVSKKKQKVIKMLLTVALLFILSWLPLWTLMMLSDYTDLSPNKLRIINIYIYPFAHWLAFCNSSVNPIIYGFFNENFRNGFQDAFQICQKKAKPQEAYSLRAKRNIVINTSGLLVQEPVSQNPGGENLGCGKSADNPTQESLIEEMGEATNSTVA.

At methionine 1–alanine 45 the chain is on the extracellular side. Residues asparagine 8, asparagine 20, and asparagine 31 are each glycosylated (N-linked (GlcNAc...) asparagine). A helical membrane pass occupies residues alanine 46–valine 66. Topologically, residues cysteine 67–phenylalanine 82 are cytoplasmic. The helical transmembrane segment at phenylalanine 83–leucine 103 threads the bilayer. The Extracellular portion of the chain corresponds to leucine 104–lysine 119. A disulfide bridge links cysteine 118 with cysteine 206. A helical transmembrane segment spans residues isoleucine 120 to alanine 140. Residues valine 141 to alanine 160 are Cytoplasmic-facing. A helical membrane pass occupies residues phenylalanine 161 to methionine 181. At leucine 182–arginine 217 the chain is on the extracellular side. N-linked (GlcNAc...) asparagine glycosylation occurs at asparagine 198. A helical transmembrane segment spans residues isoleucine 218–methionine 238. Over tyrosine 239 to methionine 274 the chain is Cytoplasmic. Residues leucine 275–leucine 295 form a helical membrane-spanning segment. Residues serine 296–asparagine 310 lie on the Extracellular side of the membrane. Residues isoleucine 311–isoleucine 331 traverse the membrane as a helical segment. The Cytoplasmic segment spans residues tyrosine 332–alanine 417. The disordered stretch occupies residues serine 382 to glutamine 401.

This sequence belongs to the G-protein coupled receptor 1 family.

Its subcellular location is the cell membrane. In terms of biological role, receptor for NPAF (A-18-F-amide) and NPFF (F-8-F-amide) neuropeptides, also known as morphine-modulating peptides. Can also be activated by a variety of naturally occurring or synthetic FMRF-amide like ligands. This receptor mediates its action by association with G proteins that activate a phosphatidylinositol-calcium second messenger system. In Mus musculus (Mouse), this protein is Neuropeptide FF receptor 2 (Npffr2).